A 220-amino-acid chain; its full sequence is Adenylate kinase (220 aa).

An ATP-binding site is contributed by 10–15; the sequence is GAGKGT. The segment at 30–59 is NMP; the sequence is STGDMLRAAVKAGTPLGVEAKGYMDAGKLV. Residues Thr31, Arg36, 57–59, 85–88, and Gln92 contribute to the AMP site; these read KLV and GFPR. The segment at 122–159 is LID; sequence GRRTHPASGRTYHVKFNPPKVEGKDDVTGEPLIQRDDD. ATP-binding positions include Arg123 and 132 to 133; that span reads TY. AMP-binding residues include Arg156 and Arg167. Gly206 is a binding site for ATP.

Belongs to the adenylate kinase family. As to quaternary structure, monomer.

Its subcellular location is the cytoplasm. It carries out the reaction AMP + ATP = 2 ADP. The protein operates within purine metabolism; AMP biosynthesis via salvage pathway; AMP from ADP: step 1/1. Catalyzes the reversible transfer of the terminal phosphate group between ATP and AMP. Plays an important role in cellular energy homeostasis and in adenine nucleotide metabolism. The protein is Adenylate kinase of Burkholderia multivorans (strain ATCC 17616 / 249).